A 225-amino-acid polypeptide reads, in one-letter code: Sugar fermentation stimulation protein homolog (225 aa).

This sequence belongs to the SfsA family.

The protein is Sugar fermentation stimulation protein homolog of Sulfurisphaera tokodaii (strain DSM 16993 / JCM 10545 / NBRC 100140 / 7) (Sulfolobus tokodaii).